We begin with the raw amino-acid sequence, 362 residues long: Chromobox protein homolog 8 (362 aa).

Positions 11–69 constitute a Chromo domain; the sequence is FAAEALLKRRIRKGRMEYLVKWKGWSQKYSTWEPEENILDARLLAAFEEREREMELYGP. The span at 90–100 shows a compositional bias: basic and acidic residues; that stretch reads KTYEFRSDSTR. Residues 90-197 are disordered; it reads KTYEFRSDST…LGEPSAGLGE (108 aa). S110 is subject to Phosphoserine. Residues 142–162 are compositionally biased toward basic and acidic residues; that stretch reads DPPRDRDRERDRGTSRVDDKP. 2 positions are modified to phosphoserine: S164 and S229. Y234 is subject to Phosphotyrosine. 4 positions are modified to phosphoserine: S238, S284, S305, and S325.

In terms of assembly, component of a PRC1-like complex. Interacts with RING1, RNF2, PCGF1, PCGF2, PCGF3, BMI1, PCGF5, PCGF6 and PHC2. Interacts with histone H3. Interacts with MLLT3. Interacts with PHC2. Interacts (via chromodomain) with single-stranded RNA.

It is found in the nucleus. It localises to the chromosome. In terms of biological role, component of a Polycomb group (PcG) multiprotein PRC1-like complex, a complex class required to maintain the transcriptionally repressive state of many genes, including Hox genes, throughout development. PcG PRC1 complex acts via chromatin remodeling and modification of histones; it mediates monoubiquitination of histone H2A 'Lys-119', rendering chromatin heritably changed in its expressibility. The sequence is that of Chromobox protein homolog 8 (Cbx8) from Mus musculus (Mouse).